A 92-amino-acid polypeptide reads, in one-letter code: Defensin (92 aa).

Residues 1 to 20 (MKFFVLVAIAFALLACVAQA) form the signal peptide. Positions 21-52 (QPVSDVDPIPEDHVLVHEDAHQEVLQHSRQKR) are excised as a propeptide. Intrachain disulfides connect cysteine 55–cysteine 82, cysteine 68–cysteine 88, and cysteine 72–cysteine 90.

It belongs to the invertebrate defensin family. Type 1 subfamily. As to expression, hemolymph (at protein level).

The protein resides in the secreted. Responsible for the anti Gram-positive activity of immune hemolymph. Expressed in the absence of immune challenge during metamorphosis. The polypeptide is Defensin (Def) (Drosophila melanogaster (Fruit fly)).